A 582-amino-acid chain; its full sequence is Protein NUCLEAR FUSION DEFECTIVE 4 (582 aa).

The tract at residues 1–20 (MRPRIRDVSDKLRPNRASFD) is disordered. Helical transmembrane passes span 46 to 66 (VLVAAIWIQASTGTNFDFSAY), 100 to 120 (IALGYFPLSVVLFAAAAMGFV), 132 to 152 (IITLPYSLVFLCCLLAGLSIC), 172 to 192 (LALSLTVSFNGISAALYSLAF), 202 to 222 (LYLLLNSLVPLVVSFAALYPV), 243 to 263 (VFTILNVLAVITSFHLLLSSS), 270 to 290 (LNFIGAVVLLVFPLCAPLLVY), and 358 to 378 (LEFWLYYIAYFCGGTIGLVYS). A glycan (N-linked (GlcNAc...) asparagine) is linked at Asn391. 5 helical membrane-spanning segments follow: residues 395-412 (LVTIYSSFSFFGRLLSAA), 425-445 (TGWFAIALLPTPIAFFLLAVS), 458-478 (LIGLSSGFIFAAAVSITSDLF), 489-509 (ILITNIPIGSLLYGYIAASIY), and 536-556 (TFVFWGCLSILGVVSSLSLYI).

The protein resides in the membrane. Required for karyogamy during female gametophyte development, when the two polar nuclei fuse to form the diploid central cell nucleus. This is Protein NUCLEAR FUSION DEFECTIVE 4 from Arabidopsis thaliana (Mouse-ear cress).